The primary structure comprises 355 residues: Probable aldo-keto reductase 3 (355 aa).

The active-site Proton donor is the Tyr-70. Residue His-138 coordinates substrate. NADP(+) is bound at residue Ser-217–Gly-227.

Belongs to the aldo/keto reductase family.

This is Probable aldo-keto reductase 3 from Oryza sativa subsp. indica (Rice).